The following is a 90-amino-acid chain: Small ribosomal subunit protein bS16 (90 aa).

This sequence belongs to the bacterial ribosomal protein bS16 family.

The polypeptide is Small ribosomal subunit protein bS16 (Shouchella clausii (strain KSM-K16) (Alkalihalobacillus clausii)).